We begin with the raw amino-acid sequence, 362 residues long: Biotin synthase (362 aa).

Positions 46–273 (NEVQVSTLLS…ASHVRLSAGR (228 aa)) constitute a Radical SAM core domain. 3 residues coordinate [4Fe-4S] cluster: Cys61, Cys65, and Cys68. [2Fe-2S] cluster contacts are provided by Cys105, Cys136, Cys196, and Arg268.

It belongs to the radical SAM superfamily. Biotin synthase family. In terms of assembly, homodimer. Requires [4Fe-4S] cluster as cofactor. [2Fe-2S] cluster is required as a cofactor.

The enzyme catalyses (4R,5S)-dethiobiotin + (sulfur carrier)-SH + 2 reduced [2Fe-2S]-[ferredoxin] + 2 S-adenosyl-L-methionine = (sulfur carrier)-H + biotin + 2 5'-deoxyadenosine + 2 L-methionine + 2 oxidized [2Fe-2S]-[ferredoxin]. Its pathway is cofactor biosynthesis; biotin biosynthesis; biotin from 7,8-diaminononanoate: step 2/2. Functionally, catalyzes the conversion of dethiobiotin (DTB) to biotin by the insertion of a sulfur atom into dethiobiotin via a radical-based mechanism. The polypeptide is Biotin synthase (Aeromonas salmonicida (strain A449)).